The following is a 177-amino-acid chain: Transcription antitermination protein NusB (177 aa).

The tract at residues 1-35 is disordered; the sequence is MTDSTHPTPSARPPRQPRTGTTGTGARKAGSKSGR. Residues 17 to 28 are compositionally biased toward low complexity; the sequence is PRTGTTGTGARK.

It belongs to the NusB family.

Involved in transcription antitermination. Required for transcription of ribosomal RNA (rRNA) genes. Binds specifically to the boxA antiterminator sequence of the ribosomal RNA (rrn) operons. The sequence is that of Transcription antitermination protein NusB from Acidovorax sp. (strain JS42).